A 227-amino-acid polypeptide reads, in one-letter code: Probable minor pilin MMP0600 (227 aa).

Residues 1 to 7 (MAKFSKG) constitute a propeptide that is removed on maturation. Residues 8–16 (QISIELILL) carry the QXSXEXXXL motif.

The N-terminus is probably cleaved by the prepilin peptidase EppA, which recognizes the class III signal sequence.

The protein localises to the secreted. It localises to the cell surface. Its subcellular location is the fimbrium. The protein is Probable minor pilin MMP0600 of Methanococcus maripaludis (strain DSM 14266 / JCM 13030 / NBRC 101832 / S2 / LL).